Reading from the N-terminus, the 869-residue chain is DNA mismatch repair protein MutS (869 aa).

Gly602 to Ser609 is a binding site for ATP.

Belongs to the DNA mismatch repair MutS family.

Functionally, this protein is involved in the repair of mismatches in DNA. It is possible that it carries out the mismatch recognition step. This protein has a weak ATPase activity. This chain is DNA mismatch repair protein MutS, found in Staphylococcus carnosus (strain TM300).